A 686-amino-acid chain; its full sequence is Chromatin modification-related protein EAF1 (686 aa).

Residues 71-97 (QMKRRQNDHHNQGPPPKVQKSTVDSLK) are disordered. The HSA domain occupies 202 to 280 (FKFIRKSKKK…DKSIIRNLPV (79 aa)). Residues 354-418 (IPTIWLPEDD…FERYIQLNDK (65 aa)) form the Myb-like domain. Disordered regions lie at residues 493–517 (RKST…RIPT), 544–617 (ARMV…QQRR), and 657–686 (QQGY…PNNA). Residues 497-506 (AELQANQNVT) show a composition bias toward polar residues. Over residues 554–568 (APAPAPAPPPPPPPK) the composition is skewed to pro residues. Residues 574–588 (TTPNGTPLTNEQIQH) are compositionally biased toward polar residues. Residues 599–613 (LQQQQQQQQQQQHQQ) show a composition bias toward low complexity. Over residues 671–686 (QKNQTASPMSGSPNNA) the composition is skewed to polar residues.

It belongs to the EAF1 family. As to quaternary structure, component of the NuA4 histone acetyltransferase complex.

It localises to the nucleus. In terms of biological role, component of the NuA4 histone acetyltransferase complex which is involved in transcriptional activation of selected genes principally by acetylation of nucleosomal histone H4 and H2A. The NuA4 complex is also involved in DNA repair. The sequence is that of Chromatin modification-related protein EAF1 (VID21) from Candida albicans (strain SC5314 / ATCC MYA-2876) (Yeast).